Reading from the N-terminus, the 346-residue chain is ATP-dependent (S)-NAD(P)H-hydrate dehydratase 2 (346 aa).

The disordered stretch occupies residues 1-20 (MMVHSPLATGPHPTTHLEPT). One can recognise a YjeF C-terminal domain in the interval 28–339 (LLRKAFQMIP…GYIGEAFEQV (312 aa)). (6S)-NADPHX-binding positions include Gly-135 and 188–194 (NHVEFQR). Residues 228 to 232 (KGSID) and 248 to 257 (GSPKRCGGQG) each bind ATP. Asp-258 serves as a coordination point for (6S)-NADPHX.

The protein belongs to the NnrD/CARKD family. It depends on Mg(2+) as a cofactor.

Its subcellular location is the cytoplasm. The catalysed reaction is (6S)-NADHX + ATP = ADP + phosphate + NADH + H(+). It carries out the reaction (6S)-NADPHX + ATP = ADP + phosphate + NADPH + H(+). Functionally, catalyzes the dehydration of the S-form of NAD(P)HX at the expense of ATP, which is converted to ADP. Together with NAD(P)HX epimerase, which catalyzes the epimerization of the S- and R-forms, the enzyme allows the repair of both epimers of NAD(P)HX, a damaged form of NAD(P)H that is a result of enzymatic or heat-dependent hydration. The polypeptide is ATP-dependent (S)-NAD(P)H-hydrate dehydratase 2 (Puccinia graminis f. sp. tritici (strain CRL 75-36-700-3 / race SCCL) (Black stem rust fungus)).